The primary structure comprises 2027 residues: Citron Rho-interacting kinase (2027 aa).

Position 1 is an N-acetylmethionine (Met-1). One can recognise a Protein kinase domain in the interval 97-360 (FEVRSLVGCG…FEGLCCHPFF (264 aa)). ATP-binding positions include 103–111 (VGCGHFAEV) and Lys-126. Asp-221 serves as the catalytic Proton acceptor. Positions 361-431 (SKIDWNNIRN…SKALGILGRS (71 aa)) constitute an AGC-kinase C-terminal domain. Ser-433, Ser-440, Ser-480, and Ser-582 each carry phosphoserine. Residues 453 to 1297 (IKSKELQDSQ…SAREEAAHRK (845 aa)) adopt a coiled-coil conformation. Positions 1091-1302 (LAVKEHKAEI…AAHRKATDHP (212 aa)) are interaction with Rho/Rac. Tyr-1196 is subject to Phosphotyrosine. A compositionally biased stretch (basic and acidic residues) spans 1290–1303 (REEAAHRKATDHPH). Disordered stretches follow at residues 1290-1310 (REEA…PATA) and 1322-1351 (SPEH…EFSR). A compositionally biased stretch (low complexity) spans 1327 to 1337 (PSAMSLLAPPS). Residues 1339–1351 (RRKESSTPEEFSR) are compositionally biased toward basic and acidic residues. The Phorbol-ester/DAG-type zinc-finger motif lies at 1362–1411 (PHRFNVGLNMRATKCAVCLDTVHFGRQASKCLECQVMCHPKCSTCLPATC). The 121-residue stretch at 1443 to 1563 (SLHLEGWMKV…WVTALESVVA (121 aa)) folds into the PH domain. Residues 1591-1881 (RLDMNCTLPF…RYLGPAISSG (291 aa)) form the CNH domain. The residue at position 1721 (Lys-1721) is an N6-acetyllysine. The tract at residues 1905–2012 (ESGTEHHRGP…RGRLPAGAVR (108 aa)) is disordered. Ser-1940 bears the Phosphoserine mark. The segment covering 1948-2003 (SHPREPSTPHRYREGRTELRRDKSPGRPLEREKSPGRMLSTRRERSPGRLFEDSSR) has biased composition (basic and acidic residues). An SH3-binding motif is present at residues 1953-1958 (PSTPHR). The residue at position 1993 (Ser-1993) is a Phosphoserine. Thr-2013 is subject to Phosphothreonine.

The protein belongs to the protein kinase superfamily. AGC Ser/Thr protein kinase family. As to quaternary structure, directly interacts with KIF14 depending on the activation state (stronger interaction with the kinase-dead form). Homodimer. Interacts with TTC3.

The protein localises to the cytoplasm. It catalyses the reaction L-seryl-[protein] + ATP = O-phospho-L-seryl-[protein] + ADP + H(+). It carries out the reaction L-threonyl-[protein] + ATP = O-phospho-L-threonyl-[protein] + ADP + H(+). Plays a role in cytokinesis. Required for KIF14 localization to the central spindle and midbody. Putative RHO/RAC effector that binds to the GTP-bound forms of RHO and RAC1. It probably binds p21 with a tighter specificity in vivo. Displays serine/threonine protein kinase activity. Plays an important role in the regulation of cytokinesis and the development of the central nervous system. Phosphorylates MYL9/MLC2. The chain is Citron Rho-interacting kinase (CIT) from Homo sapiens (Human).